The primary structure comprises 207 residues: MQASADSTRMECLWSNWKCQAIDLLYWRDIKQTGIVFGSVLLMLFSLIQFSVVSVMAYLALAALSATISFRIYKSVLQAVQKTDEGHPFKSYLDMEISLSQEQIQKYTDCLQVYTNSIAKELRRLFLVQDLVDSLKFAVLMWLLTYVGALFNGLTLLIMAVVSMFSLPVVYDKYQAQIDQYLGLVRTNMNTIMTKIQAKIPGTKQKE.

The 187-residue stretch at 21 to 207 (AIDLLYWRDI…AKIPGTKQKE (187 aa)) folds into the Reticulon domain. 2 helical membrane passes run 35–55 (IVFGSVLLMLFSLIQFSVVSV) and 139–159 (VLMWLLTYVGALFNGLTLLIM).

In terms of tissue distribution, expressed in the animal hemisphere (presumptive neural ectoderm) of blastula and gastrula stage embryos, and along the anterior neural border, in the panplacodal primordium, and in the dorsolateral side of archenteron roof of late neurula embryos. At the tailbud stage, expression localizes to the central nervous system, including the spinal cord, prosencephalon, mesencephalon and rhombencephalon, as well as the lateral line placode, otic vesicle and pronephros.

Its subcellular location is the endoplasmic reticulum membrane. The protein resides in the nucleus. Its function is as follows. Inhibits amyloid precursor protein processing, probably by blocking BACE1 activity. This is Reticulon-1-A (rtn1-a) from Xenopus laevis (African clawed frog).